We begin with the raw amino-acid sequence, 604 residues long: Aspartate--tRNA(Asp/Asn) ligase (604 aa).

Glu-175 lines the L-aspartate pocket. An aspartate region spans residues 199-202 (QQFK). Positions 221 and 456 each coordinate L-aspartate. Residue 221–223 (RDE) participates in ATP binding. Glu-496 contacts ATP. Arg-503 contributes to the L-aspartate binding site. 548-551 (GVDR) contacts ATP.

This sequence belongs to the class-II aminoacyl-tRNA synthetase family. Type 1 subfamily. In terms of assembly, homodimer.

The protein localises to the cytoplasm. The catalysed reaction is tRNA(Asx) + L-aspartate + ATP = L-aspartyl-tRNA(Asx) + AMP + diphosphate. In terms of biological role, aspartyl-tRNA synthetase with relaxed tRNA specificity since it is able to aspartylate not only its cognate tRNA(Asp) but also tRNA(Asn). Reaction proceeds in two steps: L-aspartate is first activated by ATP to form Asp-AMP and then transferred to the acceptor end of tRNA(Asp/Asn). The sequence is that of Aspartate--tRNA(Asp/Asn) ligase from Methylobacterium sp. (strain 4-46).